Here is a 236-residue protein sequence, read N- to C-terminus: NAD-dependent protein deacetylase (236 aa).

A Deacetylase sirtuin-type domain is found at 1–236; that stretch reads MIKDWLQESN…EFLRSISNEG (236 aa). Positions 18, 22, 29, 30, 96, 98, 99, and 114 each coordinate NAD(+). Position 29 (F29) interacts with nicotinamide. Nicotinamide-binding residues include V98 and D99. The active-site Proton acceptor is the H114. The Zn(2+) site is built by C122, C125, C141, and C143. NAD(+) is bound by residues S181, S182, N206, and I225.

This sequence belongs to the sirtuin family. Class U subfamily. The cofactor is Zn(2+).

Its subcellular location is the cytoplasm. It catalyses the reaction N(6)-acetyl-L-lysyl-[protein] + NAD(+) + H2O = 2''-O-acetyl-ADP-D-ribose + nicotinamide + L-lysyl-[protein]. In terms of biological role, NAD-dependent protein deacetylase which modulates the activities of several enzymes which are inactive in their acetylated form. The protein is NAD-dependent protein deacetylase of Oceanobacillus iheyensis (strain DSM 14371 / CIP 107618 / JCM 11309 / KCTC 3954 / HTE831).